The primary structure comprises 736 residues: Serine/threonine-protein kinase BRSK2 (736 aa).

The Protein kinase domain occupies 19-270 (YRLEKTLGKG…LEHIQKHIWY (252 aa)). Residues 25–33 (LGKGQTGLV) and lysine 48 contribute to the ATP site. Aspartate 141 serves as the catalytic Proton acceptor. A Phosphothreonine; by LKB1 modification is found at threonine 174. The residue at position 260 (threonine 260) is a Phosphothreonine; by PKA. Serine 294 is subject to Phosphoserine. The UBA domain maps to 297 to 339 (DIDPDVLDSMHSLGCFRDRNKLLQDLLSEEENQEKMIYFLLLD). Residues 345–366 (PSQEDEDLPPRNEIDPPRKRVD) are compositionally biased toward basic and acidic residues. 2 disordered regions span residues 345–475 (PSQE…GVPW) and 493–513 (HRRK…PESS). Phosphoserine is present on residues serine 367, serine 382, serine 393, serine 412, alanine 416, serine 423, and serine 427. A compositionally biased stretch (low complexity) spans 410–428 (SRSISGASSGLSTSPLSSP). Positions 431-445 (TPHPSPRGSPLPTPK) are enriched in pro residues. Residue serine 455 is modified to Phosphoserine. Residues threonine 459, threonine 463, and threonine 509 each carry the phosphothreonine modification. 3 positions are modified to phosphoserine: serine 512, serine 513, and serine 520. The KEN box signature appears at 603 to 605 (KEN). The interval 681–736 (KNGQAAQAPSTPAKRSAHGPLGDSAAAGPGPGGDAEYPTGKDTAKMGPPTARREQP) is disordered. Low complexity predominate over residues 699-708 (GPLGDSAAAG).

The protein belongs to the protein kinase superfamily. CAMK Ser/Thr protein kinase family. SNF1 subfamily. Interacts with FZR1, a regulatory subunit of the APC ubiquitin ligase complex. Interacts with COPS5. Interacts with PAK1. The cofactor is Mg(2+). In terms of processing, phosphorylated at Thr-174 by STK11/LKB1 in complex with STE20-related adapter-alpha (STRADA) pseudo kinase and CAB39. Not phosphorylated at Thr-174 by CaMKK2. In contrast, it is phosphorylated and activated by CaMKK1. May be inactivated via dephosphorylation of Thr-174 by PP2C. Phosphorylated at Thr-260 by PKA. Phosphorylation at Thr-260 by PKA was not observed in another study, but this may reflect differences in the experimental approach. Phosphorylation at Thr-260 seems to play a role in the regulation of insulin secretion. Polyubiquitinated by the APC complex in conjunction with FZR1, leading to its proteasomal degradation. Targeted for proteasomal degradation by interaction with COPS5. BRSK2 levels change during the cell cycle. BRSK2 levels are low at the G1/S boundary and gradually increase as cells progress into G2 phase. BRSK2 levels decrease rapidly at the end of mitosis. In terms of tissue distribution, detected in pancreas islets (at protein level).

It localises to the cytoplasm. The protein resides in the cytoskeleton. It is found in the microtubule organizing center. The protein localises to the centrosome. Its subcellular location is the perinuclear region. It localises to the endoplasmic reticulum. The catalysed reaction is L-seryl-[protein] + ATP = O-phospho-L-seryl-[protein] + ADP + H(+). The enzyme catalyses L-threonyl-[protein] + ATP = O-phospho-L-threonyl-[protein] + ADP + H(+). It catalyses the reaction L-seryl-[tau protein] + ATP = O-phospho-L-seryl-[tau protein] + ADP + H(+). It carries out the reaction L-threonyl-[tau protein] + ATP = O-phospho-L-threonyl-[tau protein] + ADP + H(+). Its activity is regulated as follows. Activated by phosphorylation on Thr-174 by STK11/LKB1. Functionally, serine/threonine-protein kinase that plays a key role in polarization of neurons and axonogenesis, cell cycle progress and insulin secretion. Phosphorylates CDK16, CDC25C, MAPT/TAU, PAK1 and WEE1. Following phosphorylation and activation by STK11/LKB1, acts as a key regulator of polarization of cortical neurons, probably by mediating phosphorylation of microtubule-associated proteins such as MAPT/TAU at 'Thr-529' and 'Ser-579'. Also regulates neuron polarization by mediating phosphorylation of WEE1 at 'Ser-642' in postmitotic neurons, leading to down-regulate WEE1 activity in polarized neurons. Plays a role in the regulation of the mitotic cell cycle progress and the onset of mitosis. Plays a role in the regulation of insulin secretion in response to elevated glucose levels, probably via phosphorylation of CDK16 and PAK1. While BRSK2 phosphorylated at Thr-174 can inhibit insulin secretion, BRSK2 phosphorylated at Thr-260 can promote insulin secretion. Regulates reorganization of the actin cytoskeleton. May play a role in the apoptotic response triggered by endoplasmic reticulum (ER) stress. In Homo sapiens (Human), this protein is Serine/threonine-protein kinase BRSK2 (BRSK2).